The primary structure comprises 122 residues: Probable F-box protein At4g23960 (122 aa).

The region spanning 1–45 (MIEQLFPEVTCYALRYLDYSSLCQLSMTSSSMRKTANDDVLWRAL) is the F-box domain.

The chain is Probable F-box protein At4g23960 from Arabidopsis thaliana (Mouse-ear cress).